We begin with the raw amino-acid sequence, 189 residues long: MFGSDDSGCHVMDDDVAPPANGSKAVTLLLRLITLALALTSAVLMATASECTIYGLDGATATTVTFKDYQPFIYLVGSNIAATILEVAAIYVQVGKGDDVEDAPMIPRVVLVVVDVAVQMLLYSATGAVFAAVMAYGPQISACTGAAGHFCEQVQRSKIISLAASLSAVLAAVAKDVALPCSVWPHPSS.

Topologically, residues 1–24 (MFGSDDSGCHVMDDDVAPPANGSK) are cytoplasmic. Residues 25–45 (AVTLLLRLITLALALTSAVLM) traverse the membrane as a helical segment. The Extracellular segment spans residues 46-71 (ATASECTIYGLDGATATTVTFKDYQP). Residues 72–92 (FIYLVGSNIAATILEVAAIYV) traverse the membrane as a helical segment. The Cytoplasmic portion of the chain corresponds to 93–109 (QVGKGDDVEDAPMIPRV). A helical transmembrane segment spans residues 110–130 (VLVVVDVAVQMLLYSATGAVF). The Extracellular portion of the chain corresponds to 131–158 (AAVMAYGPQISACTGAAGHFCEQVQRSK). A helical transmembrane segment spans residues 159 to 179 (IISLAASLSAVLAAVAKDVAL). At 180–189 (PCSVWPHPSS) the chain is on the cytoplasmic side.

It belongs to the Casparian strip membrane proteins (CASP) family. As to quaternary structure, homodimer and heterodimers.

It is found in the cell membrane. The sequence is that of CASP-like protein 1U2 from Sorghum bicolor (Sorghum).